The following is a 287-amino-acid chain: Taxis protein CheF2 (287 aa).

Interacts with chemotaxis (Che) proteins as well as flagella accessory (Fla) proteins.

Functionally, involved in taxis signal transduction. This is Taxis protein CheF2 (cheF2) from Halobacterium salinarum (strain ATCC 29341 / DSM 671 / R1).